A 92-amino-acid chain; its full sequence is Phosphoribosyl-ATP pyrophosphatase (92 aa).

This sequence belongs to the PRA-PH family.

The protein resides in the cytoplasm. The enzyme catalyses 1-(5-phospho-beta-D-ribosyl)-ATP + H2O = 1-(5-phospho-beta-D-ribosyl)-5'-AMP + diphosphate + H(+). Its pathway is amino-acid biosynthesis; L-histidine biosynthesis; L-histidine from 5-phospho-alpha-D-ribose 1-diphosphate: step 2/9. This chain is Phosphoribosyl-ATP pyrophosphatase, found in Leptospira biflexa serovar Patoc (strain Patoc 1 / ATCC 23582 / Paris).